The primary structure comprises 95 residues: Co-chaperonin GroES (95 aa).

The protein belongs to the GroES chaperonin family. Heptamer of 7 subunits arranged in a ring. Interacts with the chaperonin GroEL.

Its subcellular location is the cytoplasm. Functionally, together with the chaperonin GroEL, plays an essential role in assisting protein folding. The GroEL-GroES system forms a nano-cage that allows encapsulation of the non-native substrate proteins and provides a physical environment optimized to promote and accelerate protein folding. GroES binds to the apical surface of the GroEL ring, thereby capping the opening of the GroEL channel. In Cereibacter sphaeroides (strain ATCC 17025 / ATH 2.4.3) (Rhodobacter sphaeroides), this protein is Co-chaperonin GroES.